Here is a 1819-residue protein sequence, read N- to C-terminus: Gamma-tubulin complex component 6 (1819 aa).

Disordered regions lie at residues 810–889 (SEAH…GARP), 929–951 (LPPSAPGEAPAAASTQPSRPQEY), and 1000–1023 (RETLLPSHPPRRAALEEGSSQPTE). Repeat copies occupy residues 1027 to 1053 (GQVSGGGLPTGDYASEIAPTRPRWNTH), 1054 to 1080 (GHVSDASIRVGENVSDVAPTQPRWNTH), 1081 to 1107 (GHVSNASISLGESVSDVAPTRPRWNIH), 1108 to 1134 (GHVSNASIRVGENVSDVAPTRPRWNTH), 1135 to 1161 (GHVSNASIRVGENVSDVAPTRPRWNTH), 1162 to 1188 (GHVSDASISLGESVSDMAPARPRWNTH), 1189 to 1215 (GHVSDASISLGESVSDMAPTRPRWNTH), 1216 to 1242 (GHVSDTSIRVGENVSDVAPIRSRCNTH), and 1243 to 1269 (GHVSDASISLGEPVSDVVSTRPRWNTH). Positions 1027-1269 (GQVSGGGLPT…VSTRPRWNTH (243 aa)) are 9 X 27 AA tandem repeats. Residues 1271-1412 (PIPPPHMVLG…EAEASAAEAQ (142 aa)) are disordered. Positions 1297 to 1314 (PPGHTSQSALSLGAQSTV) are enriched in polar residues. The span at 1321 to 1335 (LPVEVGPSLSSPSSG) shows a compositional bias: low complexity. Positions 1384–1398 (WPLNSQEDTAAQSSP) are enriched in polar residues.

It belongs to the TUBGCP family. As to quaternary structure, component of the gamma-tubulin ring complex (gTuRC) consisting of TUBGCP2, TUBGCP3, TUBGCP4, TUBGCP5 and TUBGCP6 and gamma-tubulin TUBG1 or TUBG2. TUBGCP2, TUBGCP3, TUBGCP4, TUBGCP5 and TUBGCP6 assemble in a 5:5:2:1:1 stoichiometry; each is associated with a gamma-tubulin, thereby arranging 14 gamma-tubulins in a helical manner. Gamma-tubulin at the first position is blocked by TUBGCP3 at the last position, allowing 13 protafilaments to grow into a microtubule. The gTuRC (via TUBGCP3 and TUBGCP6) interacts with ACTB and MZT1; the interactions form a luminal bridge that stabilizes the initial structure during complex assembly. The gTuRC (via TUBGCP2) interacts with MZT2A/MZT2B and CDK5RAP2 (via CM1 motif); the interactions play a role in gTuRC activation.

It is found in the cytoplasm. The protein resides in the cytoskeleton. Its subcellular location is the microtubule organizing center. It localises to the centrosome. Its function is as follows. Component of the gamma-tubulin ring complex (gTuRC) which mediates microtubule nucleation. The gTuRC regulates the minus-end nucleation of alpha-beta tubulin heterodimers that grow into microtubule protafilaments, a critical step in centrosome duplication and spindle formation. The chain is Gamma-tubulin complex component 6 (TUBGCP6) from Homo sapiens (Human).